An 811-amino-acid polypeptide reads, in one-letter code: Probable inorganic carbon transporter subunit DabA (811 aa).

The Zn(2+) site is built by C336, D338, H498, and C513.

This sequence belongs to the inorganic carbon transporter (TC 9.A.2) DabA family. As to quaternary structure, forms a complex with DabB. It depends on Zn(2+) as a cofactor.

It is found in the cell inner membrane. In terms of biological role, part of an energy-coupled inorganic carbon pump. In Azorhizobium caulinodans (strain ATCC 43989 / DSM 5975 / JCM 20966 / LMG 6465 / NBRC 14845 / NCIMB 13405 / ORS 571), this protein is Probable inorganic carbon transporter subunit DabA.